Consider the following 450-residue polypeptide: Phosphoglucosamine mutase (450 aa).

The active-site Phosphoserine intermediate is the Ser97. Mg(2+) contacts are provided by Ser97, Asp236, Asp238, and Asp240. Ser97 bears the Phosphoserine mark.

It belongs to the phosphohexose mutase family. The cofactor is Mg(2+). Activated by phosphorylation.

The catalysed reaction is alpha-D-glucosamine 1-phosphate = D-glucosamine 6-phosphate. Its function is as follows. Catalyzes the conversion of glucosamine-6-phosphate to glucosamine-1-phosphate. The polypeptide is Phosphoglucosamine mutase (Prochlorococcus marinus (strain MIT 9312)).